The following is a 398-amino-acid chain: Deoxyguanosinetriphosphate triphosphohydrolase-like protein (398 aa).

Residues 68–215 form the HD domain; it reads RLTHTLEVAQ…AAISDDIAYD (148 aa).

It belongs to the dGTPase family. Type 2 subfamily.

In Azorhizobium caulinodans (strain ATCC 43989 / DSM 5975 / JCM 20966 / LMG 6465 / NBRC 14845 / NCIMB 13405 / ORS 571), this protein is Deoxyguanosinetriphosphate triphosphohydrolase-like protein.